The following is a 229-amino-acid chain: MTTMAETQTWQTVLGEEKQEPYFQEILDFVKKERKAGKIIYPPQKDIFNALKLTPYEAVKVVILGQDPYHGPNQAHGLAFSVRPGVPAPPSLQNIFKELHADLGVSIPSHGFLEKWAKQGVLLLNAALTVEAGKPQSHANIGWHRFTDKVIESLNDHPEGIVFLLWGSYAQKKSQLITNLRHRILKAPHPSPLSAARGFLGCRHFSKANQLLHEMGRGEIDWALDEKVS.

Aspartate 67 (proton acceptor) is an active-site residue.

Belongs to the uracil-DNA glycosylase (UDG) superfamily. UNG family.

The protein localises to the cytoplasm. The catalysed reaction is Hydrolyzes single-stranded DNA or mismatched double-stranded DNA and polynucleotides, releasing free uracil.. Functionally, excises uracil residues from the DNA which can arise as a result of misincorporation of dUMP residues by DNA polymerase or due to deamination of cytosine. The sequence is that of Uracil-DNA glycosylase from Coxiella burnetii (strain CbuK_Q154) (Coxiella burnetii (strain Q154)).